The primary structure comprises 600 residues: Aspartate--tRNA(Asp/Asn) ligase (600 aa).

Glu187 contacts L-aspartate. An aspartate region spans residues 211–214; the sequence is QIFK. The L-aspartate site is built by Arg233 and His463. 233-235 lines the ATP pocket; it reads RDE. Glu497 is a binding site for ATP. An L-aspartate-binding site is contributed by Arg504. Position 549–552 (549–552) interacts with ATP; it reads GVDR.

Belongs to the class-II aminoacyl-tRNA synthetase family. Type 1 subfamily. In terms of assembly, homodimer.

It localises to the cytoplasm. It catalyses the reaction tRNA(Asx) + L-aspartate + ATP = L-aspartyl-tRNA(Asx) + AMP + diphosphate. Its function is as follows. Aspartyl-tRNA synthetase with relaxed tRNA specificity since it is able to aspartylate not only its cognate tRNA(Asp) but also tRNA(Asn). Reaction proceeds in two steps: L-aspartate is first activated by ATP to form Asp-AMP and then transferred to the acceptor end of tRNA(Asp/Asn). The chain is Aspartate--tRNA(Asp/Asn) ligase from Wolbachia pipientis wMel.